We begin with the raw amino-acid sequence, 446 residues long: RUN domain-containing protein 3A (446 aa).

An interaction with RAP2A region spans residues 1-298 (MEASFVQTTM…LQLQLEEAAA (298 aa)). Residues 52 to 189 (DDSSEEFVNF…IDFSFCLKGE (138 aa)) enclose the RUN domain. The residue at position 215 (Thr-215) is a Phosphothreonine. The disordered stretch occupies residues 216–239 (DEEERHSAESSTSEDNSPEHPYLP). Ser-232 bears the Phosphoserine mark. Residues 267 to 322 (YLEELVRLRESQLKDLEAENRRLQLQLEEAAAQNQREKRELEGVILELQEQLTGLI) adopt a coiled-coil conformation. Residues 372 to 384 (PLSAEASLSSDSQ) are compositionally biased toward polar residues. Positions 372-404 (PLSAEASLSSDSQRLGEGTRDEEPWGPIGKDPT) are disordered. Residues Ser-416 and Ser-419 each carry the phosphoserine modification.

The protein belongs to the RUNDC3 family. Interacts with the GTP-bound form of RAP2A.

In terms of biological role, may act as an effector of RAP2A in neuronal cells. This Homo sapiens (Human) protein is RUN domain-containing protein 3A (RUNDC3A).